The sequence spans 67 residues: Archaeal histone HAN1 subunit A (67 aa).

Interaction with DNA stretches follow at residues 20 to 22 (RVS) and 54 to 57 (KTVK).

The protein belongs to the archaeal histone HMF family. Heterodimer. Dimers then assemble into higher oligomers, with the DNA wrapped around the protein core.

It is found in the cytoplasm. The protein localises to the chromosome. In terms of biological role, binds and compact DNA (95 to 150 base pairs) to form nucleosome-like structures that contain positive DNA supercoils. Increases the resistance of DNA to thermal denaturation (in vitro). The sequence is that of Archaeal histone HAN1 subunit A (han1A) from Thermococcus zilligii.